A 582-amino-acid chain; its full sequence is Leucine-rich repeat protein SHOC-2 (582 aa).

2 stretches are compositionally biased toward basic and acidic residues: residues 1–29 (MSSS…KEAK) and 36–57 (KESK…KKDS). Positions 1–88 (MSSSLGKEKD…PGTRKKSSNA (88 aa)) are disordered. The short motif at 63-66 (GVAF) is the RVxF motif; important for interaction with PP1c element. 20 LRR repeats span residues 101–122 (NSMR…IKEL), 124–145 (QLTE…VGCL), 147–169 (NLMT…DNLK), 170–191 (KLRM…VYRL), 193–214 (SLTT…IKNL), 216–237 (KLSM…IGEL), 239–260 (NLIT…IGNC), 262–283 (QITN…IGNL), 285–307 (SLSR…AKCS), 308–329 (ALEE…LLSS), 332–353 (KLNS…GPSQ), 356–377 (TIYS…IFSR), 380–400 (VLSK…DFGT), 403–424 (SMVE…VSGL), 426–448 (SLEV…GNLR), 449–470 (KLRE…IAYL), 472–494 (DLQK…GHLT), 495–516 (NLTH…IGTL), 518–540 (NLEE…LALC), and 542–563 (KLSI…IVAG).

This sequence belongs to the SHOC2 family. In terms of assembly, component of the SHOC2-MRAS-PP1c (SMP) complex consisting of SHOC2, GTP-bound M-Ras/MRAS and the catalytic subunit of protein phosphatase 1 (either PPP1CA, PPP1CB or PPP1CC). SHOC2 and PP1c preferably bind M-Ras/MRAS, but they also bind K-Ras/KRAS, N-Ras/NRAS and H-Ras/HRAS; these interactions are GTP-dependent and both SHOC2 and PP1c are required to form a stable complex. Interacts with PP1c in the absence of Ras GTPases. Interacts with M-Ras/MRAS and RAF1. Interacts with ERBIN; disrupts the interaction with RAF1 and Ras, preventing the activation of the Ras signaling pathway. Interacts with LZTR1.

It localises to the cytoplasm. It is found in the nucleus. Its function is as follows. Core component of the SHOC2-MRAS-PP1c (SMP) holophosphatase complex that regulates activation of the MAPK pathway. Acts as a scaffolding protein in the SMP complex. The SMP complex specifically dephosphorylates the inhibitory phosphorylation at 'Ser-259' of RAF1 kinase, 'Ser-365' of BRAF kinase and 'Ser-214' of ARAF kinase, stimulating their kinase activities. The SMP complex enhances the dephosphorylation activity and substrate specificity of PP1c. The sequence is that of Leucine-rich repeat protein SHOC-2 (SHOC2) from Homo sapiens (Human).